The sequence spans 293 residues: Serine/threonine-protein phosphatase 2A catalytic subunit beta isoform (293 aa).

Residues aspartate 41, histidine 43, aspartate 69, and asparagine 101 each contribute to the Mn(2+) site. Catalysis depends on histidine 102, which acts as the Proton donor. Mn(2+) contacts are provided by histidine 151 and histidine 225. Tyrosine 291 carries the post-translational modification Phosphotyrosine. At leucine 293 the chain carries Leucine methyl ester.

It belongs to the PPP phosphatase family. PP-1 subfamily. Found in a complex with at least ARL2, PPP2CB, PPP2R1A, PPP2R2A, PPP2R5E and TBCD. Interacts with TBCD. PP2A consists of a common heterodimeric core enzyme (composed of a 36 kDa catalytic subunit (subunit C) and a 65 kDa constant regulatory subunit (PR65) (subunit A)) that associates with a variety of regulatory subunits. Proteins that associate with the core dimer include three families of regulatory subunits B (the R2/B/PR55/B55, R3/B''/PR72/PR130/PR59 and R5/B'/B56 families), the 48 kDa variable regulatory subunit, viral proteins, and cell signaling molecules. Binds PPME1. May indirectly interact with SGO1, most probably through regulatory B56 subunits. Interacts with CTTNBP2NL. Interacts with PTPA. Part of the core of STRIPAK complexes composed of PP2A catalytic and scaffolding subunits, the striatins (PP2A regulatory subunits), the striatin-associated proteins MOB4, STRIP1 and STRIP2, PDCD10 and members of the STE20 kinases, such as STK24 and STK26. Mn(2+) serves as cofactor. In terms of processing, reversibly methyl esterified on Leu-293 by leucine carboxyl methyltransferase 1 (Lcmt1) and protein phosphatase methylesterase 1 (PPME1). Carboxyl methylation influences the affinity of the catalytic subunit for the different regulatory subunits, thereby modulating the PP2A holoenzyme's substrate specificity, enzyme activity and cellular localization. Phosphorylation of either threonine (by autophosphorylation-activated protein kinase) or tyrosine results in inactivation of the phosphatase. Auto-dephosphorylation has been suggested as a mechanism for reactivation. Post-translationally, may be monoubiquitinated by NOSIP.

The protein localises to the cytoplasm. The protein resides in the nucleus. It localises to the chromosome. It is found in the centromere. Its subcellular location is the cytoskeleton. The protein localises to the spindle pole. It catalyses the reaction O-phospho-L-seryl-[protein] + H2O = L-seryl-[protein] + phosphate. It carries out the reaction O-phospho-L-threonyl-[protein] + H2O = L-threonyl-[protein] + phosphate. Functionally, catalytic subunit of protein phosphatase 2A (PP2A), a serine/threonine phosphatase involved in the regulation of a wide variety of enzymes, signal transduction pathways, and cellular events. PP2A can modulate the activity of phosphorylase B kinase, casein kinase 2, mitogen-stimulated S6 kinase, and MAP-2 kinase. Part of the striatin-interacting phosphatase and kinase (STRIPAK) complexes. STRIPAK complexes have critical roles in protein (de)phosphorylation and are regulators of multiple signaling pathways including Hippo, MAPK, nuclear receptor and cytoskeleton remodeling. Different types of STRIPAK complexes are involved in a variety of biological processes such as cell growth, differentiation, apoptosis, metabolism and immune regulation. In Sus scrofa (Pig), this protein is Serine/threonine-protein phosphatase 2A catalytic subunit beta isoform (PPP2CB).